The following is a 412-amino-acid chain: Membrane fusion protein MtrC (412 aa).

An N-terminal signal peptide occupies residues 1–24; that stretch reads MAFYASKAMRAAALAAAVALALSS. A lipid anchor (N-palmitoyl cysteine) is attached at cysteine 25. Cysteine 25 is lipidated: S-diacylglycerol cysteine. Residues 377 to 412 form a disordered region; it reads AKKVTPKEWAPSENQAAAPQAGVQTASEAKPASEAK. A compositionally biased stretch (polar residues) spans 388-403; sequence SENQAAAPQAGVQTAS.

The protein belongs to the membrane fusion protein (MFP) (TC 8.A.1) family.

It localises to the cell inner membrane. Its function is as follows. Cell membrane lipoprotein, involved in cell membrane permeability to hydrophobic compounds such as antibiotics, dyes and detergents. This chain is Membrane fusion protein MtrC (mtrC), found in Neisseria gonorrhoeae.